Consider the following 340-residue polypeptide: MEF2 transcription factor homolog (340 aa).

An MADS-box domain is found at 1 to 61 (MGRKKIQITR…NKLFQYASTD (61 aa)). 4 disordered regions span residues 90–112 (RKEGNQGGGNSDDESPGPSTSPV), 193–217 (NQRNDPLSSTSVAPSSSSSKHLDFP), 258–283 (LQQRPVSQPAPSISNSSTNGISNGTS), and 312–340 (PNTYVKMEPHSPPEKRPRITTEWRPQQLT). Over residues 200 to 211 (SSTSVAPSSSSS) the composition is skewed to low complexity. A compositionally biased stretch (polar residues) spans 258–268 (LQQRPVSQPAP). Positions 269-283 (SISNSSTNGISNGTS) are enriched in low complexity. Residues 318–332 (MEPHSPPEKRPRITT) are compositionally biased toward basic and acidic residues.

The protein belongs to the MEF2 family. In terms of assembly, interacts with histone deacetylase hda-4 isoform b.

Its subcellular location is the nucleus. In terms of biological role, transcription regulator. Binds specifically to the MEF2 element, 5'-[TC]TA[AT][AT][AT][AT]TA[AG]-3' in the regulatory elements of target genes, such as chemoreceptors str-1 and srh-234. Involved in transduction of sensory signals, together with egl-4, kin-29 and hda-4; binding to histone deacetylase hda-4 enables negative modulation of chemoreceptor gene expression in chemosensory neurons. In response to starvation, negatively modulates expression of chemoreceptor srh-234 in ADL sensory neurons, acting in concert with basic helix-loop-helix (bHLH) transcription factors. Plays a role in regulating muscle sensitivity to acetylcholine (ACh) and the magnitude of presynaptic ACh release via a retrograde signal, perhaps by indirectly decreasing Ras-related protein Rab-3 activity. This chain is MEF2 transcription factor homolog, found in Caenorhabditis elegans.